We begin with the raw amino-acid sequence, 277 residues long: 2-dehydro-3-deoxyphosphooctonate aldolase (277 aa).

The protein belongs to the KdsA family.

It is found in the cytoplasm. The enzyme catalyses D-arabinose 5-phosphate + phosphoenolpyruvate + H2O = 3-deoxy-alpha-D-manno-2-octulosonate-8-phosphate + phosphate. The protein operates within carbohydrate biosynthesis; 3-deoxy-D-manno-octulosonate biosynthesis; 3-deoxy-D-manno-octulosonate from D-ribulose 5-phosphate: step 2/3. It functions in the pathway bacterial outer membrane biogenesis; lipopolysaccharide biosynthesis. This Syntrophotalea carbinolica (strain DSM 2380 / NBRC 103641 / GraBd1) (Pelobacter carbinolicus) protein is 2-dehydro-3-deoxyphosphooctonate aldolase.